Here is a 391-residue protein sequence, read N- to C-terminus: Phosphoglycerate kinase (391 aa).

Residues 21–23 (DLN), Arg36, 59–62 (HLGR), Arg113, and Arg146 contribute to the substrate site. Residues Lys197, Glu319, and 345-348 (GGDT) contribute to the ATP site.

The protein belongs to the phosphoglycerate kinase family. In terms of assembly, monomer.

The protein localises to the cytoplasm. It catalyses the reaction (2R)-3-phosphoglycerate + ATP = (2R)-3-phospho-glyceroyl phosphate + ADP. It participates in carbohydrate degradation; glycolysis; pyruvate from D-glyceraldehyde 3-phosphate: step 2/5. This is Phosphoglycerate kinase from Shewanella sp. (strain ANA-3).